The sequence spans 201 residues: Urease accessory protein UreG (201 aa).

G11–T18 is a GTP binding site.

This sequence belongs to the SIMIBI class G3E GTPase family. UreG subfamily. In terms of assembly, homodimer. UreD, UreF and UreG form a complex that acts as a GTP-hydrolysis-dependent molecular chaperone, activating the urease apoprotein by helping to assemble the nickel containing metallocenter of UreC. The UreE protein probably delivers the nickel.

Its subcellular location is the cytoplasm. Functionally, facilitates the functional incorporation of the urease nickel metallocenter. This process requires GTP hydrolysis, probably effectuated by UreG. The sequence is that of Urease accessory protein UreG from Prochlorococcus marinus subsp. pastoris (strain CCMP1986 / NIES-2087 / MED4).